The primary structure comprises 1347 residues: Protocadherin-11 X-linked (1347 aa).

Residues 1–23 (MDLLSGTYIFAVLLACVVFHSGA) form the signal peptide. The Extracellular portion of the chain corresponds to 24–812 (QEKNYTIREE…VSSPTSDYVK (789 aa)). 7 consecutive Cadherin domains span residues 26-139 (KNYT…APLF), 140-249 (PATV…HPVF), 250-355 (KETE…VPSI), 362-466 (NPVN…APVF), 467-570 (TQSF…SPVF), 571-673 (THNE…KPVF), and 677-795 (PSNY…APVT). N-linked (GlcNAc...) asparagine glycosylation is found at Asn27, Asn48, and Asn54. A glycan (N-linked (GlcNAc...) asparagine) is linked at Asn344. Asn553 carries N-linked (GlcNAc...) asparagine glycosylation. N-linked (GlcNAc...) asparagine glycosylation is present at Asn773. A helical membrane pass occupies residues 813–833 (ILVAAVAGTITVVVVIFITAV). At 834–1347 (VRCRQAPHLK…DSPVMEEHPL (514 aa)) the chain is on the cytoplasmic side. 3 disordered regions span residues 1057-1091 (LPEG…GYPQ), 1097-1116 (RATP…ESTF), and 1325-1347 (TFTP…EHPL).

It localises to the cell membrane. Functionally, potential calcium-dependent cell-adhesion protein. The polypeptide is Protocadherin-11 X-linked (PCDH11X) (Pan troglodytes (Chimpanzee)).